Reading from the N-terminus, the 82-residue chain is Translational regulator CsrA (82 aa).

This sequence belongs to the CsrA/RsmA family. As to quaternary structure, homodimer; the beta-strands of each monomer intercalate to form a hydrophobic core while the alpha-helices form wings that extend away from the core. Each of the alpha-helical wings interacts with an FliW monomer, yielding a FliW-CsrA(2)-FliW complex.

The protein localises to the cytoplasm. In terms of biological role, a translational regulator that binds mRNA to regulate translation initiation and/or mRNA stability. Usually binds in the 5'-UTR at or near the Shine-Dalgarno sequence preventing ribosome-binding, thus repressing translation. Its main target seems to be the major flagellin gene, while its function is anatagonized by FliW. This chain is Translational regulator CsrA, found in Geobacillus thermodenitrificans (strain NG80-2).